The following is a 519-amino-acid chain: Importin subunit alpha-5 (519 aa).

In terms of domain architecture, IBB spans 1–58 (MSLRPSTKTEIRRIRYKVSVDAEEGRRRREDFLVEIRKSKRNENLMKKRRVKVLPPDY). ARM repeat units lie at residues 103–143 (SPPT…NIAS), 146–185 (SEHTKVVIDHGVVPLFVQLLASPDDDVREQAIWGLGNVAG), 188–228 (IQCR…NFFR), 230–269 (KPSPPFDLVKHVLPVLKRLVYSDDEQVLIDACWALSNLSD), 272–311 (NENIQSVIEAGVVPRLVELLQHASPVVLVPALRCIGNIVS), 314–354 (SQQT…NITA), 357–396 (EEQIQSVIDANLIPSLVNLAQHAEFDIKKEAIWAISNASV), and 400–439 (PNQIKYLVEQNCIKALCDILVCPDLRIILVSLGGLEMILI).

This sequence belongs to the importin alpha family. As to quaternary structure, forms a complex with importin subunit beta-1.

Its subcellular location is the nucleus envelope. In terms of biological role, binds to conventional NLS motifs and mediates nuclear protein import across the nuclear envelope. The sequence is that of Importin subunit alpha-5 from Arabidopsis thaliana (Mouse-ear cress).